A 1399-amino-acid chain; its full sequence is DNA-directed RNA polymerase subunit beta' (1399 aa).

Zn(2+) contacts are provided by cysteine 70, cysteine 72, cysteine 85, and cysteine 88. Positions 460, 462, and 464 each coordinate Mg(2+). 4 residues coordinate Zn(2+): cysteine 814, cysteine 888, cysteine 895, and cysteine 898.

The protein belongs to the RNA polymerase beta' chain family. In terms of assembly, the RNAP catalytic core consists of 2 alpha, 1 beta, 1 beta' and 1 omega subunit. When a sigma factor is associated with the core the holoenzyme is formed, which can initiate transcription. Requires Mg(2+) as cofactor. It depends on Zn(2+) as a cofactor.

It catalyses the reaction RNA(n) + a ribonucleoside 5'-triphosphate = RNA(n+1) + diphosphate. In terms of biological role, DNA-dependent RNA polymerase catalyzes the transcription of DNA into RNA using the four ribonucleoside triphosphates as substrates. This Pseudomonas putida (strain ATCC 700007 / DSM 6899 / JCM 31910 / BCRC 17059 / LMG 24140 / F1) protein is DNA-directed RNA polymerase subunit beta'.